The chain runs to 395 residues: Tryptophan synthase beta chain (395 aa).

At K89 the chain carries N6-(pyridoxal phosphate)lysine.

This sequence belongs to the TrpB family. As to quaternary structure, tetramer of two alpha and two beta chains. Requires pyridoxal 5'-phosphate as cofactor.

It catalyses the reaction (1S,2R)-1-C-(indol-3-yl)glycerol 3-phosphate + L-serine = D-glyceraldehyde 3-phosphate + L-tryptophan + H2O. It participates in amino-acid biosynthesis; L-tryptophan biosynthesis; L-tryptophan from chorismate: step 5/5. In terms of biological role, the beta subunit is responsible for the synthesis of L-tryptophan from indole and L-serine. This Fusobacterium nucleatum subsp. nucleatum (strain ATCC 25586 / DSM 15643 / BCRC 10681 / CIP 101130 / JCM 8532 / KCTC 2640 / LMG 13131 / VPI 4355) protein is Tryptophan synthase beta chain.